Reading from the N-terminus, the 972-residue chain is 116 kDa U5 small nuclear ribonucleoprotein component (972 aa).

M1 is subject to N-acetylmethionine. The interval 1–53 is disordered; that stretch reads MDTDLYDEFGNYIGPELDSDEDDDELGRETKDLDEVDEDEDDDDVGDHDEDHP. 2 stretches are compositionally biased toward acidic residues: residues 17 to 26 and 34 to 48; these read LDSDEDDDEL and DEVDEDEDDDDVGDH. The residue at position 19 (S19) is a Phosphoserine. K64 participates in a covalent cross-link: Glycyl lysine isopeptide (Lys-Gly) (interchain with G-Cter in SUMO1); alternate. Residue K64 forms a Glycyl lysine isopeptide (Lys-Gly) (interchain with G-Cter in SUMO2); alternate linkage. Phosphothreonine is present on T86. Residues 127–409 form the tr-type G domain; that stretch reads ELIRNVTLCG…GIHLTKEELK (283 aa). GTP contacts are provided by residues 136–143, 204–208, and 258–261; these read GHLHHGKT, DTPGH, and NKID.

This sequence belongs to the TRAFAC class translation factor GTPase superfamily. Classic translation factor GTPase family. EF-G/EF-2 subfamily. In terms of assembly, component of the U5 snRNP and the U4/U6-U5 tri-snRNP complex, a building block of the spliceosome. The U4/U6-U5 tri-snRNP complex is composed of the U4, U6 and U5 snRNAs and at least PRPF3, PRPF4, PRPF6, PRPF8, PRPF31, SNRNP200, TXNL4A, SNRNP40, DDX23, CD2BP2, PPIH, SNU13, EFTUD2, SART1 and USP39. Component of the pre-catalytic, catalytic and post-catalytic spliceosome complexes. Component of the minor spliceosome, which splices U12-type introns. Within this complex, interacts with CRIPT. Interacts with ERBB4 and PRPF8. Interacts with PIH1D1. Interacts with RPAP3 and URI1 in a ZNHIT2-dependent manner. Interacts with NRDE2. Interacts with FAM50A. Interacts with UBL5.

The protein resides in the nucleus. In terms of biological role, required for pre-mRNA splicing as component of the spliceosome, including pre-catalytic, catalytic and post-catalytic spliceosomal complexes. Component of the U5 snRNP and the U4/U6-U5 tri-snRNP complex, a building block of the spliceosome. As a component of the minor spliceosome, involved in the splicing of U12-type introns in pre-mRNAs. This chain is 116 kDa U5 small nuclear ribonucleoprotein component (EFTUD2), found in Bos taurus (Bovine).